We begin with the raw amino-acid sequence, 417 residues long: Tryptophan synthase beta chain (417 aa).

K111 bears the N6-(pyridoxal phosphate)lysine mark.

The protein belongs to the TrpB family. As to quaternary structure, tetramer of two alpha and two beta chains. Pyridoxal 5'-phosphate serves as cofactor.

The catalysed reaction is (1S,2R)-1-C-(indol-3-yl)glycerol 3-phosphate + L-serine = D-glyceraldehyde 3-phosphate + L-tryptophan + H2O. Its pathway is amino-acid biosynthesis; L-tryptophan biosynthesis; L-tryptophan from chorismate: step 5/5. Its function is as follows. The beta subunit is responsible for the synthesis of L-tryptophan from indole and L-serine. The protein is Tryptophan synthase beta chain of Fervidobacterium nodosum (strain ATCC 35602 / DSM 5306 / Rt17-B1).